The following is a 336-amino-acid chain: Probable deoxyhypusine synthase (336 aa).

Residue K308 is the Nucleophile of the active site.

The protein belongs to the deoxyhypusine synthase family. The cofactor is NAD(+).

It carries out the reaction [eIF5A protein]-L-lysine + spermidine = [eIF5A protein]-deoxyhypusine + propane-1,3-diamine. It functions in the pathway protein modification; eIF5A hypusination. Its function is as follows. Catalyzes the NAD-dependent oxidative cleavage of spermidine and the subsequent transfer of the butylamine moiety of spermidine to the epsilon-amino group of a specific lysine residue of the eIF-5A precursor protein to form the intermediate deoxyhypusine residue. This is Probable deoxyhypusine synthase from Thermococcus gammatolerans (strain DSM 15229 / JCM 11827 / EJ3).